A 782-amino-acid chain; its full sequence is Endonuclease MutS2 (782 aa).

An ATP-binding site is contributed by 336-343 (GPNTGGKT). In terms of domain architecture, Smr spans 707–782 (LDLRGYRYED…GFGVTVATLK (76 aa)).

Belongs to the DNA mismatch repair MutS family. MutS2 subfamily. Homodimer. Binds to stalled ribosomes, contacting rRNA.

Endonuclease that is involved in the suppression of homologous recombination and thus may have a key role in the control of bacterial genetic diversity. Its function is as follows. Acts as a ribosome collision sensor, splitting the ribosome into its 2 subunits. Detects stalled/collided 70S ribosomes which it binds and splits by an ATP-hydrolysis driven conformational change. Acts upstream of the ribosome quality control system (RQC), a ribosome-associated complex that mediates the extraction of incompletely synthesized nascent chains from stalled ribosomes and their subsequent degradation. Probably generates substrates for RQC. This is Endonuclease MutS2 from Staphylococcus aureus (strain Mu50 / ATCC 700699).